A 229-amino-acid polypeptide reads, in one-letter code: Extracellular small neutral protease (229 aa).

Residues 1–28 form the signal peptide; that stretch reads MRMPLSVLTAAGLSLATLGLGTAGPASA. The propeptide occupies 29 to 81; it reads TPTAEGAPVVAYDGSPSAGSPADAKAEAAANRAFFEAVLRSVAEKRAANPKST. Positions 159 and 161 each coordinate Ca(2+). H166 contributes to the Zn(2+) binding site. E167 is an active-site residue. Positions 170 and 176 each coordinate Zn(2+). A disulfide bridge connects residues C182 and C195.

This sequence belongs to the peptidase M7 family. As to quaternary structure, monomer. Ca(2+) is required as a cofactor. The cofactor is Zn(2+).

The protein resides in the secreted. It catalyses the reaction Hydrolyzes proteins with a preference for Tyr or Phe in the P1' position. Has no action on amino-acid p-nitroanilides.. Milk hydrolyzing. This Streptomyces sp. (strain C5) protein is Extracellular small neutral protease (snpA).